We begin with the raw amino-acid sequence, 133 residues long: Small ribosomal subunit protein uS8 (133 aa).

It belongs to the universal ribosomal protein uS8 family. As to quaternary structure, part of the 30S ribosomal subunit. Contacts proteins S5 and S12.

One of the primary rRNA binding proteins, it binds directly to 16S rRNA central domain where it helps coordinate assembly of the platform of the 30S subunit. The polypeptide is Small ribosomal subunit protein uS8 (Prochlorococcus marinus (strain MIT 9301)).